Reading from the N-terminus, the 379-residue chain is Chaperone protein DnaJ (379 aa).

Residues 5-70 (DYYESLGVAK…QKRAAYDQYG (66 aa)) enclose the J domain. The CR-type zinc-finger motif lies at 134–212 (GVTKEIRIPA…CHGHGRVEKS (79 aa)). The Zn(2+) site is built by Cys147, Cys150, Cys164, Cys167, Cys186, Cys189, Cys200, and Cys203. CXXCXGXG motif repeat units follow at residues 147–154 (CDVCHGNG), 164–171 (CPTCHGNG), 186–193 (CPHCHGRG), and 200–207 (CIKCHGHG).

This sequence belongs to the DnaJ family. In terms of assembly, homodimer. The cofactor is Zn(2+).

Its subcellular location is the cytoplasm. Participates actively in the response to hyperosmotic and heat shock by preventing the aggregation of stress-denatured proteins and by disaggregating proteins, also in an autonomous, DnaK-independent fashion. Unfolded proteins bind initially to DnaJ; upon interaction with the DnaJ-bound protein, DnaK hydrolyzes its bound ATP, resulting in the formation of a stable complex. GrpE releases ADP from DnaK; ATP binding to DnaK triggers the release of the substrate protein, thus completing the reaction cycle. Several rounds of ATP-dependent interactions between DnaJ, DnaK and GrpE are required for fully efficient folding. Also involved, together with DnaK and GrpE, in the DNA replication of plasmids through activation of initiation proteins. The protein is Chaperone protein DnaJ of Pectobacterium atrosepticum (strain SCRI 1043 / ATCC BAA-672) (Erwinia carotovora subsp. atroseptica).